Here is a 201-residue protein sequence, read N- to C-terminus: 3-isopropylmalate dehydratase small subunit (201 aa).

The protein belongs to the LeuD family. LeuD type 1 subfamily. Heterodimer of LeuC and LeuD.

The catalysed reaction is (2R,3S)-3-isopropylmalate = (2S)-2-isopropylmalate. The protein operates within amino-acid biosynthesis; L-leucine biosynthesis; L-leucine from 3-methyl-2-oxobutanoate: step 2/4. Its function is as follows. Catalyzes the isomerization between 2-isopropylmalate and 3-isopropylmalate, via the formation of 2-isopropylmaleate. The sequence is that of 3-isopropylmalate dehydratase small subunit from Shewanella sp. (strain MR-7).